Reading from the N-terminus, the 325-residue chain is Urease accessory protein UreD (325 aa).

This sequence belongs to the UreD family. In terms of assembly, ureD, UreF and UreG form a complex that acts as a GTP-hydrolysis-dependent molecular chaperone, activating the urease apoprotein by helping to assemble the nickel containing metallocenter of UreC. The UreE protein probably delivers the nickel.

It localises to the cytoplasm. Its function is as follows. Required for maturation of urease via the functional incorporation of the urease nickel metallocenter. Functionally, expression of the urease operon increases the likelihood of bacterial survival by contributing to acid resistance in vitro and in vivo in BALB/c mice. Y.enterocolitica enters the body via an oral path and must survive the acidic stomach before being able to colonize the intestinal mucosa. This Yersinia enterocolitica protein is Urease accessory protein UreD.